The chain runs to 186 residues: tRNA (cytidine(56)-2'-O)-methyltransferase (186 aa).

Residues leucine 84 and glycine 110–valine 114 each bind S-adenosyl-L-methionine.

The protein belongs to the aTrm56 family. As to quaternary structure, homodimer.

Its subcellular location is the cytoplasm. The catalysed reaction is cytidine(56) in tRNA + S-adenosyl-L-methionine = 2'-O-methylcytidine(56) in tRNA + S-adenosyl-L-homocysteine + H(+). Functionally, specifically catalyzes the AdoMet-dependent 2'-O-ribose methylation of cytidine at position 56 in tRNAs. This is tRNA (cytidine(56)-2'-O)-methyltransferase from Staphylothermus marinus (strain ATCC 43588 / DSM 3639 / JCM 9404 / F1).